Here is a 68-residue protein sequence, read N- to C-terminus: Glu S.griseus protease inhibitor (68 aa).

S1 is subject to N-acetylserine. C3 and C48 form a disulfide bridge.

The protein belongs to the protease inhibitor I13 (potato type I serine protease inhibitor) family.

Functionally, competitively inhibits Glu S.griseus protease by forming probably a 1:1 complex. BGIA has no inhibitory activity against 2 other acidic amino acid-specific endopeptidases (S.aureus protease V8 and B.subtilis proteinase), chymotrypsin, trypsin, pancreatic elastase, and papain, although subtilisin Carlsberg was strongly inhibited. This is Glu S.griseus protease inhibitor from Momordica charantia (Bitter gourd).